A 438-amino-acid chain; its full sequence is MHPLPSVALLSAIGAVAAQVGPWGQCGGRSYTGETSCVSGWSCVLFNEWYSQCQPATTTSTSSVSATAAPSSTSSSKESVPSATTSKKPVPTGSSSFVKADGLKFNIDGETKYFAGTNAYWLPFLTNDADVDSVMDNLQKAGLKILRTWGFNDVNSKPSSGTVYFQLHDPSTGTTTINTGADGLQRLDYVVSAAEKRGIKLLIPLVNNWDDYGGMNAYVKAYGGSKTEWYTNSKIQSVYQAYIKAVVSRYRDSPAIMAWELSNEARCQGCSTDVIYNWTAKTSAYIKSLDPNHMVATGDEGMGVTVDSDGSYPYSTYEGSDFAKNLAAPDIDFGVFHLYTEDWGIKDNSWGNGWVTSHAKVCKAAGKPCLFEEYGLKDDHCSASLTWQKTSVSSGMAADLFWQYGQTLSTGPSPNDHFTIYYGTSDWQCGVADHLSTL.

A signal peptide spans 1–17 (MHPLPSVALLSAIGAVA). One can recognise a CBM1 domain in the interval 19-54 (QVGPWGQCGGRSYTGETSCVSGWSCVLFNEWYSQCQ). Residues 60 to 96 (STSSVSATAAPSSTSSSKESVPSATTSKKPVPTGSSS) are ser-rich linker. Residues 61 to 86 (TSSVSATAAPSSTSSSKESVPSATTS) show a composition bias toward low complexity. The interval 61-92 (TSSVSATAAPSSTSSSKESVPSATTSKKPVPT) is disordered. The segment at 97-438 (FVKADGLKFN…CGVADHLSTL (342 aa)) is catalytic. Residues W149 and N263 each coordinate substrate. The active-site Proton donor is the E264. An N-linked (GlcNAc...) asparagine glycan is attached at N277. Substrate is bound at residue Y339. E373 functions as the Nucleophile in the catalytic mechanism. W402 is a substrate binding site.

The protein belongs to the glycosyl hydrolase 5 (cellulase A) family.

The protein resides in the secreted. It catalyses the reaction Random hydrolysis of (1-&gt;4)-beta-D-mannosidic linkages in mannans, galactomannans and glucomannans.. Its function is as follows. Endo-1,4-mannanase, a crucial enzyme for depolymerization of seed galactomannans and wood galactoglucomannans. The protein is Mannan endo-1,4-beta-mannosidase F (manF) of Aspergillus fumigatus (strain ATCC MYA-4609 / CBS 101355 / FGSC A1100 / Af293) (Neosartorya fumigata).